Reading from the N-terminus, the 396-residue chain is S-adenosylmethionine synthase (396 aa).

His16 provides a ligand contact to ATP. Asp18 serves as a coordination point for Mg(2+). Glu44 contributes to the K(+) binding site. The L-methionine site is built by Glu57 and Gln100. The flexible loop stretch occupies residues 100–110; it reads QSVDIAQGVDR. Residues 165–167, 231–232, Asp240, 246–247, Ala263, and Lys267 contribute to the ATP site; these read DAK, KF, and RK. An L-methionine-binding site is contributed by Asp240. Lys271 contributes to the L-methionine binding site.

Belongs to the AdoMet synthase family. Homotetramer; dimer of dimers. Mg(2+) serves as cofactor. It depends on K(+) as a cofactor.

It is found in the cytoplasm. The catalysed reaction is L-methionine + ATP + H2O = S-adenosyl-L-methionine + phosphate + diphosphate. It participates in amino-acid biosynthesis; S-adenosyl-L-methionine biosynthesis; S-adenosyl-L-methionine from L-methionine: step 1/1. Functionally, catalyzes the formation of S-adenosylmethionine (AdoMet) from methionine and ATP. The overall synthetic reaction is composed of two sequential steps, AdoMet formation and the subsequent tripolyphosphate hydrolysis which occurs prior to release of AdoMet from the enzyme. In Marinobacter nauticus (strain ATCC 700491 / DSM 11845 / VT8) (Marinobacter aquaeolei), this protein is S-adenosylmethionine synthase.